A 405-amino-acid chain; its full sequence is Proline-rich P65 protein (405 aa).

The disordered stretch occupies residues 1-58 (MDINKPGWNQSDQQATAYDPNQQQYYGDGSTYYDPDQAVDPNQAYYPDPNTYPDAAAY). The span at 7–25 (GWNQSDQQATAYDPNQQQY) shows a compositional bias: polar residues. A run of 12 repeats spans residues 40 to 45 (DPNQAY), 75 to 80 (DPNQAY), 83 to 87 (DPNAY), 89 to 93 (DPNAY), 95 to 99 (DPNAY), 101 to 105 (DPNAY), 107 to 111 (DPNAY), 119 to 123 (DPNAY), 140 to 145 (DPNQAY), 148 to 152 (DPNAY), 154 to 158 (DPNAY), and 168 to 172 (DPNAY). The segment at 40 to 172 (DPNQAYYPDP…YVTSTDPNAY (133 aa)) is 12 X 5 AA repeats of D-P-N-Q-A-Y.

Post-translationally, the N-terminus is blocked.

It localises to the cell membrane. This is Proline-rich P65 protein (p65) from Mycoplasma pneumoniae (strain ATCC 29342 / M129 / Subtype 1) (Mycoplasmoides pneumoniae).